A 97-amino-acid polypeptide reads, in one-letter code: Mapk-regulated corepressor-interacting protein 1 (97 aa).

Positions 1–30 (MTSSPVSRVVYNGKRNSSHRSPPNSSEIFT) are disordered. Serine 21 is subject to Phosphoserine. A Phosphothreonine modification is found at threonine 30. Tyrosine 41 is modified (phosphotyrosine). The interval 77–97 (TFRPIDLSDLKRRNTQDAKKS) is disordered. The PXDLS motif motif lies at 80 to 84 (PIDLS). The segment covering 82–97 (DLSDLKRRNTQDAKKS) has biased composition (basic and acidic residues).

It belongs to the MCRIP family. As to quaternary structure, interacts (unphosphorylated form, via the PXDLS motif) with CTBP1, competitively inhibiting CTBP-ZEB1 interaction. Interacts with CTBP2. Interacts with MCRIP2. Interacts with DDX6. Post-translationally, phosphorylation by MAPK3/1 (ERK1/2) regulates MCRIP1 binding to CTBP(s).

The protein resides in the nucleus. Its subcellular location is the cytoplasm. The protein localises to the stress granule. Functionally, the phosphorylation status of MCRIP1 functions as a molecular switch to regulate epithelial-mesenchymal transition. Unphosphorylated MCRIP1 binds to and inhibits the transcriptional corepressor CTBP(s). When phosphorylated by MAPK/ERK, MCRIP1 releases CTBP(s) resulting in transcriptional silencing of the E-cadherin gene and induction of epithelial-mesenchymal transition. The chain is Mapk-regulated corepressor-interacting protein 1 (MCRIP1) from Bos taurus (Bovine).